The following is a 274-amino-acid chain: Large ribosomal subunit protein uL2 (274 aa).

2 disordered regions span residues 28–53 and 223–274; these read APYA…TVRH and VAMN…RRNK. The segment covering 39–48 has biased composition (low complexity); it reads KSGGRNNNGR.

Belongs to the universal ribosomal protein uL2 family. In terms of assembly, part of the 50S ribosomal subunit. Forms a bridge to the 30S subunit in the 70S ribosome.

Functionally, one of the primary rRNA binding proteins. Required for association of the 30S and 50S subunits to form the 70S ribosome, for tRNA binding and peptide bond formation. It has been suggested to have peptidyltransferase activity; this is somewhat controversial. Makes several contacts with the 16S rRNA in the 70S ribosome. The protein is Large ribosomal subunit protein uL2 of Pseudoalteromonas atlantica (strain T6c / ATCC BAA-1087).